The primary structure comprises 156 residues: Small ribosomal subunit protein uS7 (156 aa).

It belongs to the universal ribosomal protein uS7 family. In terms of assembly, part of the 30S ribosomal subunit. Contacts proteins S9 and S11.

Its function is as follows. One of the primary rRNA binding proteins, it binds directly to 16S rRNA where it nucleates assembly of the head domain of the 30S subunit. Is located at the subunit interface close to the decoding center, probably blocks exit of the E-site tRNA. The sequence is that of Small ribosomal subunit protein uS7 from Chlorobaculum tepidum (strain ATCC 49652 / DSM 12025 / NBRC 103806 / TLS) (Chlorobium tepidum).